We begin with the raw amino-acid sequence, 198 residues long: Imidazoleglycerol-phosphate dehydratase (198 aa).

This sequence belongs to the imidazoleglycerol-phosphate dehydratase family.

The protein resides in the cytoplasm. The catalysed reaction is D-erythro-1-(imidazol-4-yl)glycerol 3-phosphate = 3-(imidazol-4-yl)-2-oxopropyl phosphate + H2O. It participates in amino-acid biosynthesis; L-histidine biosynthesis; L-histidine from 5-phospho-alpha-D-ribose 1-diphosphate: step 6/9. The protein is Imidazoleglycerol-phosphate dehydratase of Janthinobacterium sp. (strain Marseille) (Minibacterium massiliensis).